The following is a 442-amino-acid chain: Radical S-adenosyl methionine domain-containing protein 1, mitochondrial (442 aa).

Residues 1–17 (MVPSGVRTGRWVAAARA) constitute a mitochondrion transit peptide. Residues 34-270 (ESASTRAALY…RTVLRDAGFR (237 aa)) enclose the Radical SAM core domain. Y43 lines the S-adenosyl-L-methionine pocket. [4Fe-4S] cluster-binding residues include C49, C53, and C56. S-adenosyl-L-methionine contacts are provided by residues G98, 99-100 (GT), E131, Q158, R170, and D195.

It belongs to the anaerobic coproporphyrinogen-III oxidase family. HemW subfamily. Requires [4Fe-4S] cluster as cofactor.

Its subcellular location is the mitochondrion. Its function is as follows. May be a heme chaperone, appears to bind heme. Homologous bacterial proteins do not have oxygen-independent coproporphyrinogen-III oxidase activity. Binds 1 [4Fe-4S] cluster. The cluster is coordinated with 3 cysteines and an exchangeable S-adenosyl-L-methionine. The polypeptide is Radical S-adenosyl methionine domain-containing protein 1, mitochondrial (Rsad1) (Mus musculus (Mouse)).